A 268-amino-acid chain; its full sequence is Glutamate racemase (268 aa).

Residues 13–14 (DS) and 45–46 (YG) each bind substrate. The active-site Proton donor/acceptor is Cys77. 78 to 79 (NT) contributes to the substrate binding site. Cys185 functions as the Proton donor/acceptor in the catalytic mechanism. Position 186–187 (186–187 (TH)) interacts with substrate.

This sequence belongs to the aspartate/glutamate racemases family.

It catalyses the reaction L-glutamate = D-glutamate. Its pathway is cell wall biogenesis; peptidoglycan biosynthesis. In terms of biological role, provides the (R)-glutamate required for cell wall biosynthesis. The sequence is that of Glutamate racemase from Vibrio campbellii (strain ATCC BAA-1116).